A 644-amino-acid chain; its full sequence is CTP synthase (644 aa).

The region spanning 300-551 (SIAIVGKYTK…LGLILASVDR (252 aa)) is the Glutamine amidotransferase type-1 domain. Catalysis depends on for GATase activity residues Cys399, His527, and Glu529.

The protein belongs to the CTP synthase family.

It carries out the reaction UTP + L-glutamine + ATP + H2O = CTP + L-glutamate + ADP + phosphate + 2 H(+). It functions in the pathway pyrimidine metabolism; CTP biosynthesis via de novo pathway; CTP from UDP: step 2/2. Catalyzes the ATP-dependent amination of UTP to CTP with either L-glutamine or ammonia as the source of nitrogen. Constitutes the rate-limiting enzyme in the synthesis of cytosine nucleotides. In Drosophila pseudoobscura pseudoobscura (Fruit fly), this protein is CTP synthase.